The chain runs to 311 residues: Protoheme IX farnesyltransferase (311 aa).

The next 8 membrane-spanning stretches (helical) occupy residues 39–59, 61–81, 111–131, 133–153, 162–182, 187–207, 246–266, and 287–307; these read LLAM…PIGE, LPEI…AGAF, ALVL…VASP, AALF…MWSK, IGSV…SGDL, IIGL…AIAI, FFFV…SLIW, and FVFS…FSLL.

It belongs to the UbiA prenyltransferase family. Protoheme IX farnesyltransferase subfamily. Interacts with CtaA.

Its subcellular location is the cell membrane. The catalysed reaction is heme b + (2E,6E)-farnesyl diphosphate + H2O = Fe(II)-heme o + diphosphate. It participates in porphyrin-containing compound metabolism; heme O biosynthesis; heme O from protoheme: step 1/1. In terms of biological role, converts heme B (protoheme IX) to heme O by substitution of the vinyl group on carbon 2 of heme B porphyrin ring with a hydroxyethyl farnesyl side group. The polypeptide is Protoheme IX farnesyltransferase (Shouchella clausii (strain KSM-K16) (Alkalihalobacillus clausii)).